The chain runs to 1380 residues: Protein TORNADO 1 (1380 aa).

LRR repeat units follow at residues phenylalanine 26–isoleucine 46, threonine 47–leucine 70, threonine 105–arginine 132, asparagine 161–arginine 184, asparagine 266–tryptophan 289, glutamate 299–asparagine 322, lysine 323–proline 346, serine 348–threonine 371, isoleucine 446–lysine 472, and asparagine 476–alanine 502. Positions proline 493–isoleucine 702 constitute a Roc domain. Residues glycine 506–threonine 513 and asparagine 567–glutamine 571 contribute to the GTP site. The helical transmembrane segment at phenylalanine 574–leucine 594 threads the bilayer. LRR repeat units lie at residues leucine 640–aspartate 665, valine 688–leucine 712, leucine 799–lysine 826, glutamine 1023–aspartate 1046, glutamate 1131–leucine 1154, and glutamine 1229–lysine 1254. Threonine 641 to glutamate 644 serves as a coordination point for GTP. One can recognise a COR domain in the interval asparagine 757 to methionine 931. 2 consecutive transmembrane segments (helical) span residues leucine 1255 to proline 1275 and proline 1287 to glycine 1307.

As to expression, expressed in seedlings, roots, leaves, stems and flowers. Present in ovules, prominently in nucellus and integuments.

It is found in the membrane. Involved in the basipetal transport of auxin (IAA) that modulates growth and organs organization. Required for initial divisions in the epidermal/lateral root cap leading to the formation of epidermal cells and a clone of lateral root cap cells, as well as for the maintenance of the radial pattern of cell specification in the root, thus regulating the distinction between the lateral root cap and epidermis. The polypeptide is Protein TORNADO 1 (TRN1) (Arabidopsis thaliana (Mouse-ear cress)).